The chain runs to 301 residues: Coiled-coil domain-containing protein 69-B (301 aa).

Positions 1–43 are disordered; sequence MGSKTSKMCCPQLRKKKRQKAHKEGPSSQELNDLNAKSQGPNE. Gly-2 is lipidated: N-myristoyl glycine. Over residues 26 to 41 the composition is skewed to polar residues; that stretch reads PSSQELNDLNAKSQGP. 2 coiled-coil regions span residues 42 to 167 and 213 to 281; these read NELL…SILS and KSTM…NLYR.

This sequence belongs to the CCDC69 family.

The protein resides in the cytoplasm. It localises to the cytoskeleton. It is found in the spindle. The protein localises to the midbody. Functionally, may act as a scaffold to regulate the recruitment and assembly of spindle midzone components. The polypeptide is Coiled-coil domain-containing protein 69-B (ccdc69-b) (Xenopus laevis (African clawed frog)).